Reading from the N-terminus, the 1228-residue chain is DNA-directed RNA polymerase subunit beta'' (1228 aa).

The Zn(2+) site is built by Cys222, Cys296, Cys303, and Cys306.

Belongs to the RNA polymerase beta' chain family. RpoC2 subfamily. In plastids the minimal PEP RNA polymerase catalytic core is composed of four subunits: alpha, beta, beta', and beta''. When a (nuclear-encoded) sigma factor is associated with the core the holoenzyme is formed, which can initiate transcription. It depends on Zn(2+) as a cofactor.

It localises to the plastid. The protein resides in the chloroplast. It catalyses the reaction RNA(n) + a ribonucleoside 5'-triphosphate = RNA(n+1) + diphosphate. Functionally, DNA-dependent RNA polymerase catalyzes the transcription of DNA into RNA using the four ribonucleoside triphosphates as substrates. This is DNA-directed RNA polymerase subunit beta'' from Gracilaria tenuistipitata var. liui (Red alga).